A 315-amino-acid polypeptide reads, in one-letter code: tRNA dimethylallyltransferase (315 aa).

ATP is bound at residue 9–16 (GPTASGKT). Position 11 to 16 (11 to 16 (TASGKT)) interacts with substrate. 2 interaction with substrate tRNA regions span residues 34 to 37 (DSLL) and 158 to 162 (QRIQR).

The protein belongs to the IPP transferase family. In terms of assembly, monomer. Mg(2+) serves as cofactor.

It carries out the reaction adenosine(37) in tRNA + dimethylallyl diphosphate = N(6)-dimethylallyladenosine(37) in tRNA + diphosphate. Catalyzes the transfer of a dimethylallyl group onto the adenine at position 37 in tRNAs that read codons beginning with uridine, leading to the formation of N6-(dimethylallyl)adenosine (i(6)A). The polypeptide is tRNA dimethylallyltransferase (Acidithiobacillus ferrooxidans (strain ATCC 53993 / BNL-5-31) (Leptospirillum ferrooxidans (ATCC 53993))).